A 483-amino-acid chain; its full sequence is Protein hedgehog (483 aa).

Residues 1-19 (MDNQTVAAIWSCASATCLS) form the signal peptide. The propeptide occupies 20 to 92 (LDAKRHSVET…LALNFRHAHS (73 aa)). The tract at residues 28-57 (ETNTNDRQAPPGLSNSNNNNNNNKSTAVDA) is disordered. Residues 41–50 (SNSNNNNNNN) are compositionally biased toward low complexity. The N-palmitoyl cysteine moiety is linked to residue cysteine 93. Positions 157, 158, 163, 193, 194, 197, and 199 each coordinate Ca(2+). Glycine 266 carries Cholesterol glycine ester lipidation.

This sequence belongs to the hedgehog family. Interacts with shf. In terms of processing, the C-terminal part of the hedgehog protein precursor displays an autoproteolysis activity that results in the cleavage of the full-length protein into two parts (N-product and C-product). In addition, the C-terminal part displays a cholesterol transferase activity that results by the covalent attachment of a cholesterol moiety to the C-terminal of the newly generated N-product. The N-product is the active species in both local and long-range signaling, whereas the C-product has no signaling activity. Cholesterylation is required for N-product targeting to lipid rafts and multimerization. Post-translationally, N-palmitoylation by Rasp of the hedgehog N-product, within the secretory pathway, is required for the embryonic and larval patterning activities of the hedgehog signal.

The protein resides in the nucleus. The protein localises to the cytoplasm. It is found in the cell membrane. The catalysed reaction is glycyl-L-cysteinyl-[protein] + cholesterol + H(+) = [protein]-C-terminal glycyl cholesterol ester + N-terminal L-cysteinyl-[protein]. Functionally, the C-terminal part of the hedgehog protein precursor displays an autoproteolysis activity that results in the cleavage of the full-length protein into two parts (N-product and C-product). In addition, the C-terminal part displays a cholesterol transferase activity that results by the covalent attachment of a cholesterol moiety to the C-terminal of the newly generated N-product. Once cleaved, the C-product has no signaling activity and diffuses from the cell. The dually lipidated hedgehog protein N-product is a morphogen which is essential for a variety of patterning events during development. Establishes the anterior-posterior axis of the embryonic segments and patterns the larval imaginal disks. Binds to the patched (ptc) receptor, which functions in association with smoothened (smo), to activate the transcription of target genes wingless (wg), decapentaplegic (dpp) and ptc. In the absence of hh, ptc represses the constitutive signaling activity of smo through fused (fu). Essential component of a signaling pathway which regulates the Duox-dependent gut immune response to bacterial uracil; required to activate Cad99C-dependent endosome formation, norpA-dependent Ca2+ mobilization and p38 MAPK, which are essential steps in the Duox-dependent production of reactive oxygen species (ROS) in response to intestinal bacterial infection. During photoreceptor differentiation, it up-regulates transcription of Ubr3, which in turn promotes the hh-signaling pathway by mediating the ubiquitination and degradation of cos. The polypeptide is Protein hedgehog (Drosophila virilis (Fruit fly)).